A 385-amino-acid chain; its full sequence is tRNA-specific 2-thiouridylase MnmA (385 aa).

ATP is bound by residues 8–15 and L34; that span reads AMSGGVDS. Residue C102 is the Nucleophile of the active site. A disulfide bridge connects residues C102 and C200. Residue G126 coordinates ATP. An interaction with tRNA region spans residues 150 to 152; sequence KDQ. C200 serves as the catalytic Cysteine persulfide intermediate. The tract at residues 307–308 is interaction with tRNA; that stretch reads RY.

Belongs to the MnmA/TRMU family.

The protein resides in the cytoplasm. The catalysed reaction is S-sulfanyl-L-cysteinyl-[protein] + uridine(34) in tRNA + AH2 + ATP = 2-thiouridine(34) in tRNA + L-cysteinyl-[protein] + A + AMP + diphosphate + H(+). In terms of biological role, catalyzes the 2-thiolation of uridine at the wobble position (U34) of tRNA, leading to the formation of s(2)U34. The protein is tRNA-specific 2-thiouridylase MnmA of Heliobacterium modesticaldum (strain ATCC 51547 / Ice1).